We begin with the raw amino-acid sequence, 232 residues long: Large ribosomal subunit protein uL1 (232 aa).

Belongs to the universal ribosomal protein uL1 family. As to quaternary structure, part of the 50S ribosomal subunit.

In terms of biological role, binds directly to 23S rRNA. The L1 stalk is quite mobile in the ribosome, and is involved in E site tRNA release. Functionally, protein L1 is also a translational repressor protein, it controls the translation of the L11 operon by binding to its mRNA. The sequence is that of Large ribosomal subunit protein uL1 from Paraburkholderia phytofirmans (strain DSM 17436 / LMG 22146 / PsJN) (Burkholderia phytofirmans).